A 677-amino-acid chain; its full sequence is Methionine--tRNA ligase (677 aa).

A 'HIGH' region motif is present at residues 15 to 25 (PYANGSIHLGH). The Zn(2+) site is built by cysteine 146, cysteine 149, cysteine 159, and cysteine 162. A 'KMSKS' region motif is present at residues 333–337 (KMSKS). Lysine 336 lines the ATP pocket. The 103-residue stretch at 575 to 677 (DFAKVDLRVA…EGAKPGQQVK (103 aa)) folds into the tRNA-binding domain.

It belongs to the class-I aminoacyl-tRNA synthetase family. MetG type 1 subfamily. In terms of assembly, homodimer. Zn(2+) is required as a cofactor.

The protein resides in the cytoplasm. The catalysed reaction is tRNA(Met) + L-methionine + ATP = L-methionyl-tRNA(Met) + AMP + diphosphate. Is required not only for elongation of protein synthesis but also for the initiation of all mRNA translation through initiator tRNA(fMet) aminoacylation. The protein is Methionine--tRNA ligase of Enterobacter sp. (strain 638).